Reading from the N-terminus, the 142-residue chain is Large ribosomal subunit protein uL13 (142 aa).

This sequence belongs to the universal ribosomal protein uL13 family. As to quaternary structure, part of the 50S ribosomal subunit.

This protein is one of the early assembly proteins of the 50S ribosomal subunit, although it is not seen to bind rRNA by itself. It is important during the early stages of 50S assembly. The chain is Large ribosomal subunit protein uL13 from Xylella fastidiosa (strain 9a5c).